We begin with the raw amino-acid sequence, 425 residues long: Serine hydroxymethyltransferase (425 aa).

(6S)-5,6,7,8-tetrahydrofolate is bound by residues leucine 128 and 132-134 (GHL). Position 237 is an N6-(pyridoxal phosphate)lysine (lysine 237).

The protein belongs to the SHMT family. Homodimer. The cofactor is pyridoxal 5'-phosphate.

Its subcellular location is the cytoplasm. The catalysed reaction is (6R)-5,10-methylene-5,6,7,8-tetrahydrofolate + glycine + H2O = (6S)-5,6,7,8-tetrahydrofolate + L-serine. The protein operates within one-carbon metabolism; tetrahydrofolate interconversion. It functions in the pathway amino-acid biosynthesis; glycine biosynthesis; glycine from L-serine: step 1/1. In terms of biological role, catalyzes the reversible interconversion of serine and glycine with tetrahydrofolate (THF) serving as the one-carbon carrier. This reaction serves as the major source of one-carbon groups required for the biosynthesis of purines, thymidylate, methionine, and other important biomolecules. Also exhibits THF-independent aldolase activity toward beta-hydroxyamino acids, producing glycine and aldehydes, via a retro-aldol mechanism. This is Serine hydroxymethyltransferase from Wolbachia pipientis wMel.